The chain runs to 496 residues: Glycerol kinase (496 aa).

Thr12 provides a ligand contact to ADP. Residues Thr12, Thr13, and Ser14 each contribute to the ATP site. Residue Thr12 coordinates sn-glycerol 3-phosphate. Arg16 is an ADP binding site. Positions 82, 83, and 134 each coordinate sn-glycerol 3-phosphate. The glycerol site is built by Arg82, Glu83, and Tyr134. His230 carries the post-translational modification Phosphohistidine; by HPr. Sn-glycerol 3-phosphate is bound at residue Asp244. Residues Asp244 and Gln245 each coordinate glycerol. ADP is bound by residues Thr266 and Gly309. Positions 266, 309, 313, and 410 each coordinate ATP. 2 residues coordinate ADP: Gly410 and Asn414.

The protein belongs to the FGGY kinase family. In terms of assembly, homotetramer and homodimer (in equilibrium). The phosphoenolpyruvate-dependent sugar phosphotransferase system (PTS), including enzyme I, and histidine-containing protein (HPr) are required for the phosphorylation, which leads to the activation of the enzyme.

The catalysed reaction is glycerol + ATP = sn-glycerol 3-phosphate + ADP + H(+). It functions in the pathway polyol metabolism; glycerol degradation via glycerol kinase pathway; sn-glycerol 3-phosphate from glycerol: step 1/1. With respect to regulation, activated by phosphorylation and inhibited by fructose 1,6-bisphosphate (FBP). Its function is as follows. Key enzyme in the regulation of glycerol uptake and metabolism. Catalyzes the phosphorylation of glycerol to yield sn-glycerol 3-phosphate. The protein is Glycerol kinase of Bacillus mycoides (strain KBAB4) (Bacillus weihenstephanensis).